Reading from the N-terminus, the 188-residue chain is ATP synthase subunit delta (188 aa).

This sequence belongs to the ATPase delta chain family. As to quaternary structure, F-type ATPases have 2 components, F(1) - the catalytic core - and F(0) - the membrane proton channel. F(1) has five subunits: alpha(3), beta(3), gamma(1), delta(1), epsilon(1). F(0) has three main subunits: a(1), b(2) and c(10-14). The alpha and beta chains form an alternating ring which encloses part of the gamma chain. F(1) is attached to F(0) by a central stalk formed by the gamma and epsilon chains, while a peripheral stalk is formed by the delta and b chains.

The protein localises to the cell inner membrane. In terms of biological role, f(1)F(0) ATP synthase produces ATP from ADP in the presence of a proton or sodium gradient. F-type ATPases consist of two structural domains, F(1) containing the extramembraneous catalytic core and F(0) containing the membrane proton channel, linked together by a central stalk and a peripheral stalk. During catalysis, ATP synthesis in the catalytic domain of F(1) is coupled via a rotary mechanism of the central stalk subunits to proton translocation. This protein is part of the stalk that links CF(0) to CF(1). It either transmits conformational changes from CF(0) to CF(1) or is implicated in proton conduction. The chain is ATP synthase subunit delta from Rhizobium etli (strain CIAT 652).